A 239-amino-acid polypeptide reads, in one-letter code: Tetraspanin-9 (239 aa).

Topologically, residues 1-13 (MARGCLCCVKYMM) are cytoplasmic. The chain crosses the membrane as a helical span at residues 14 to 34 (FLFNLLFWLSGCGLLGVGIWL). The Extracellular segment spans residues 35-55 (SVSQGSFATFSPSFPSLSAAN). The chain crosses the membrane as a helical span at residues 56–76 (LVITLGSVVMVTGFLGCLGAI). The Cytoplasmic portion of the chain corresponds to 77–85 (KENKCLLLS). Residues 86-106 (FFIVLLIILLAELILLILFFV) traverse the membrane as a helical segment. Topologically, residues 107–203 (YTEKVSENAK…VEEWLNDNKH (97 aa)) are extracellular. Asn180 carries an N-linked (GlcNAc...) asparagine glycan. Residues 204–224 (LLGTIAMCVLVLQLLGMAFSM) traverse the membrane as a helical segment. Residues 225–239 (TLYQQIHRAGKKYDA) lie on the Cytoplasmic side of the membrane.

The protein belongs to the tetraspanin (TM4SF) family.

It is found in the membrane. The protein is Tetraspanin-9 (tspan9) of Danio rerio (Zebrafish).